Reading from the N-terminus, the 217-residue chain is Probable transaldolase (217 aa).

Residue Lys83 is the Schiff-base intermediate with substrate of the active site.

Belongs to the transaldolase family. Type 3B subfamily.

It is found in the cytoplasm. It catalyses the reaction D-sedoheptulose 7-phosphate + D-glyceraldehyde 3-phosphate = D-erythrose 4-phosphate + beta-D-fructose 6-phosphate. The protein operates within carbohydrate degradation; pentose phosphate pathway; D-glyceraldehyde 3-phosphate and beta-D-fructose 6-phosphate from D-ribose 5-phosphate and D-xylulose 5-phosphate (non-oxidative stage): step 2/3. Transaldolase is important for the balance of metabolites in the pentose-phosphate pathway. This Pseudothermotoga lettingae (strain ATCC BAA-301 / DSM 14385 / NBRC 107922 / TMO) (Thermotoga lettingae) protein is Probable transaldolase.